The following is a 430-amino-acid chain: Enolase (430 aa).

A (2R)-2-phosphoglycerate-binding site is contributed by Q167. Catalysis depends on E209, which acts as the Proton donor. D246, E287, and D314 together coordinate Mg(2+). 4 residues coordinate (2R)-2-phosphoglycerate: K339, R368, S369, and K390. The Proton acceptor role is filled by K339.

It belongs to the enolase family. It depends on Mg(2+) as a cofactor.

The protein resides in the cytoplasm. Its subcellular location is the secreted. The protein localises to the cell surface. It carries out the reaction (2R)-2-phosphoglycerate = phosphoenolpyruvate + H2O. It functions in the pathway carbohydrate degradation; glycolysis; pyruvate from D-glyceraldehyde 3-phosphate: step 4/5. Catalyzes the reversible conversion of 2-phosphoglycerate (2-PG) into phosphoenolpyruvate (PEP). It is essential for the degradation of carbohydrates via glycolysis. This Prochlorococcus marinus (strain AS9601) protein is Enolase.